Reading from the N-terminus, the 206-residue chain is Large ribosomal subunit protein uL4 (206 aa).

Residues 44–87 (NRQGTQSAKTRSEVSGGGRKPWRQKGTGHARQGSTRSPQWTGGG) are disordered.

This sequence belongs to the universal ribosomal protein uL4 family. As to quaternary structure, part of the 50S ribosomal subunit.

Functionally, one of the primary rRNA binding proteins, this protein initially binds near the 5'-end of the 23S rRNA. It is important during the early stages of 50S assembly. It makes multiple contacts with different domains of the 23S rRNA in the assembled 50S subunit and ribosome. Forms part of the polypeptide exit tunnel. This Lachnospira eligens (strain ATCC 27750 / DSM 3376 / VPI C15-48 / C15-B4) (Eubacterium eligens) protein is Large ribosomal subunit protein uL4.